The sequence spans 291 residues: 4-diphosphocytidyl-2-C-methyl-D-erythritol kinase (291 aa).

The active site involves Lys11. 97–107 (PVAAGIGGGSS) contributes to the ATP binding site. The active site involves Asp139.

The protein belongs to the GHMP kinase family. IspE subfamily.

The enzyme catalyses 4-CDP-2-C-methyl-D-erythritol + ATP = 4-CDP-2-C-methyl-D-erythritol 2-phosphate + ADP + H(+). The protein operates within isoprenoid biosynthesis; isopentenyl diphosphate biosynthesis via DXP pathway; isopentenyl diphosphate from 1-deoxy-D-xylulose 5-phosphate: step 3/6. Functionally, catalyzes the phosphorylation of the position 2 hydroxy group of 4-diphosphocytidyl-2C-methyl-D-erythritol. The chain is 4-diphosphocytidyl-2-C-methyl-D-erythritol kinase from Methylorubrum extorquens (strain CM4 / NCIMB 13688) (Methylobacterium extorquens).